A 237-amino-acid chain; its full sequence is Ribosomal RNA small subunit methyltransferase G (237 aa).

Positions 1 to 25 (MASRHSPQTAAQPDAADKAQALRLT) are disordered. Positions 7–21 (PQTAAQPDAADKAQA) are enriched in low complexity. Residues glycine 85, phenylalanine 90, and arginine 155 each contribute to the S-adenosyl-L-methionine site.

It belongs to the methyltransferase superfamily. RNA methyltransferase RsmG family.

The protein localises to the cytoplasm. It catalyses the reaction guanosine(527) in 16S rRNA + S-adenosyl-L-methionine = N(7)-methylguanosine(527) in 16S rRNA + S-adenosyl-L-homocysteine. In terms of biological role, specifically methylates the N7 position of guanine in position 527 of 16S rRNA. This is Ribosomal RNA small subunit methyltransferase G from Rhodopseudomonas palustris (strain HaA2).